A 357-amino-acid chain; its full sequence is 3-isopropylmalate dehydrogenase (357 aa).

75–88 lines the NAD(+) pocket; sequence GPKWEHLPPAEQPE. Positions 96, 106, 135, and 224 each coordinate substrate. Mg(2+) is bound by residues aspartate 224, aspartate 248, and aspartate 252. 282 to 294 contacts NAD(+); that stretch reads GSAPDIAGQGIAN.

Belongs to the isocitrate and isopropylmalate dehydrogenases family. LeuB type 1 subfamily. As to quaternary structure, homodimer. It depends on Mg(2+) as a cofactor. Mn(2+) serves as cofactor.

It localises to the cytoplasm. The enzyme catalyses (2R,3S)-3-isopropylmalate + NAD(+) = 4-methyl-2-oxopentanoate + CO2 + NADH. The protein operates within amino-acid biosynthesis; L-leucine biosynthesis; L-leucine from 3-methyl-2-oxobutanoate: step 3/4. Catalyzes the oxidation of 3-carboxy-2-hydroxy-4-methylpentanoate (3-isopropylmalate) to 3-carboxy-4-methyl-2-oxopentanoate. The product decarboxylates to 4-methyl-2 oxopentanoate. In Desulfotalea psychrophila (strain LSv54 / DSM 12343), this protein is 3-isopropylmalate dehydrogenase.